Reading from the N-terminus, the 181-residue chain is Ribonuclease HII (181 aa).

In terms of domain architecture, RNase H type-2 spans 1–181 (MICGIDEVGR…NLHRRSFKFI (181 aa)). A divalent metal cation contacts are provided by aspartate 6, glutamate 7, and aspartate 98.

Belongs to the RNase HII family. Requires Mn(2+) as cofactor. It depends on Mg(2+) as a cofactor.

It is found in the cytoplasm. The catalysed reaction is Endonucleolytic cleavage to 5'-phosphomonoester.. Functionally, endonuclease that specifically degrades the RNA of RNA-DNA hybrids. This Borrelia hermsii (strain HS1 / DAH) protein is Ribonuclease HII.